A 340-amino-acid polypeptide reads, in one-letter code: MGVDLGGLVEPREIELKELNNRTVAVDAYNTLYQFLSIIRQQDGAPLADDRGNVTSHLSGIIYRVTNLVEEGMKPVFVFDGKPPSFKAETIKARAEVREAARQMYEAAKAAGSAEAYKYAQASTSINRQIVDDAKVLLGYMGIPFIVAPSEGEAQAAYMVSRGAADYVGSQDYDSLLFGAPRVVRNIAITGKRKVPRKNIYMDVKPEVIELQEVLATLGLTREELIDMAILVGTDYNPGIFKVGPKTALKLVKKHGDNMPAILDELGQTIENWEAIKEFFLHPTVTDDYQVKWGKPEPAKIKEFLCEEHSFSVDRVDKVLERLTTAVSETTKQKTLSSWF.

The N-domain stretch occupies residues 1-98; the sequence is MGVDLGGLVE…ETIKARAEVR (98 aa). Mg(2+) is bound by residues aspartate 27, aspartate 80, glutamate 151, glutamate 153, aspartate 172, aspartate 174, and aspartate 235. Positions 115-256 are I-domain; the sequence is EAYKYAQAST…TALKLVKKHG (142 aa). An interaction with PCNA region spans residues 332-340; the sequence is KQKTLSSWF.

It belongs to the XPG/RAD2 endonuclease family. FEN1 subfamily. As to quaternary structure, interacts with PCNA. PCNA stimulates the nuclease activity without altering cleavage specificity. It depends on Mg(2+) as a cofactor.

In terms of biological role, structure-specific nuclease with 5'-flap endonuclease and 5'-3' exonuclease activities involved in DNA replication and repair. During DNA replication, cleaves the 5'-overhanging flap structure that is generated by displacement synthesis when DNA polymerase encounters the 5'-end of a downstream Okazaki fragment. Binds the unpaired 3'-DNA end and kinks the DNA to facilitate 5' cleavage specificity. Cleaves one nucleotide into the double-stranded DNA from the junction in flap DNA, leaving a nick for ligation. Also involved in the base excision repair (BER) pathway. Acts as a genome stabilization factor that prevents flaps from equilibrating into structures that lead to duplications and deletions. Also possesses 5'-3' exonuclease activity on nicked or gapped double-stranded DNA. The protein is Flap endonuclease 1 of Methanocella arvoryzae (strain DSM 22066 / NBRC 105507 / MRE50).